Reading from the N-terminus, the 474-residue chain is UDP-N-acetylmuramate--L-alanine ligase (474 aa).

ATP is bound at residue 122 to 128 (GTHGKTT).

This sequence belongs to the MurCDEF family.

The protein localises to the cytoplasm. The catalysed reaction is UDP-N-acetyl-alpha-D-muramate + L-alanine + ATP = UDP-N-acetyl-alpha-D-muramoyl-L-alanine + ADP + phosphate + H(+). It functions in the pathway cell wall biogenesis; peptidoglycan biosynthesis. Its function is as follows. Cell wall formation. The protein is UDP-N-acetylmuramate--L-alanine ligase of Saccharophagus degradans (strain 2-40 / ATCC 43961 / DSM 17024).